Reading from the N-terminus, the 101-residue chain is Acylphosphatase (101 aa).

The Acylphosphatase-like domain maps to 13–101 (RARILVRGVV…GEFRGFEIRY (89 aa)). Residues R28 and N46 contribute to the active site.

Belongs to the acylphosphatase family.

It catalyses the reaction an acyl phosphate + H2O = a carboxylate + phosphate + H(+). The protein is Acylphosphatase (acyP) of Aeropyrum pernix (strain ATCC 700893 / DSM 11879 / JCM 9820 / NBRC 100138 / K1).